The following is a 360-amino-acid chain: Peptide chain release factor 1 (360 aa).

Gln235 is modified (N5-methylglutamine). The segment at 281-310 (AERQRQDAAQAESRRLQVGSGDRSQRIRTY) is disordered.

Belongs to the prokaryotic/mitochondrial release factor family. Post-translationally, methylated by PrmC. Methylation increases the termination efficiency of RF1.

Its subcellular location is the cytoplasm. Functionally, peptide chain release factor 1 directs the termination of translation in response to the peptide chain termination codons UAG and UAA. The protein is Peptide chain release factor 1 of Stenotrophomonas maltophilia (strain K279a).